We begin with the raw amino-acid sequence, 300 residues long: MPKSSNFLDIDDLTTDELQTILDRATALKHGGDNAQFPGQTLGMLFEKPSTRTRISFETGMTQLGGHAIFLGPDDIQLGHGEPLSDTARVLSGYVDVVMARLFNHDDLLEIAAHADIPVINGLTDDAHPCQTLADLLTIKEEFGGFDDVTVVWIGDGNNVGQSFVIGAAMVGLDLTVVTPSGYGMDQSVLDQATALGHPPTIADTPGAAVSDADVVYTDVWISMGQEDQRNEKLTAFEGYQVNESLLANNSAQVMHCLPAHRGEEITDEVLTGTRTLVWDQAENRLHAQKGLLVELLSEN.

Carbamoyl phosphate contacts are provided by residues 50–53, Q77, R101, and 128–131; these read STRT and HPCQ. Residues N159, D219, and 223-224 each bind L-ornithine; that span reads SM. Carbamoyl phosphate-binding positions include 257-258 and R285; that span reads CL.

This sequence belongs to the aspartate/ornithine carbamoyltransferase superfamily. OTCase family.

The protein localises to the cytoplasm. The enzyme catalyses carbamoyl phosphate + L-ornithine = L-citrulline + phosphate + H(+). It participates in amino-acid degradation; L-arginine degradation via ADI pathway; carbamoyl phosphate from L-arginine: step 2/2. Reversibly catalyzes the transfer of the carbamoyl group from carbamoyl phosphate (CP) to the N(epsilon) atom of ornithine (ORN) to produce L-citrulline. The polypeptide is Ornithine carbamoyltransferase (Haloquadratum walsbyi (strain DSM 16790 / HBSQ001)).